Consider the following 931-residue polypeptide: Beta-mannosidase A (931 aa).

Positions 1 to 21 (MRHSIGLAAALLAPTLPVALG) are cleaved as a signal peptide. N-linked (GlcNAc...) asparagine glycans are attached at residues asparagine 40, asparagine 79, asparagine 247, asparagine 282, asparagine 316, asparagine 326, and asparagine 347. The Proton donor role is filled by glutamate 479. Residues asparagine 550, asparagine 608, asparagine 658, asparagine 738, asparagine 790, asparagine 798, asparagine 830, and asparagine 918 are each glycosylated (N-linked (GlcNAc...) asparagine).

It belongs to the glycosyl hydrolase 2 family. Beta-mannosidase A subfamily. Homodimer.

It localises to the secreted. The enzyme catalyses Hydrolysis of terminal, non-reducing beta-D-mannose residues in beta-D-mannosides.. It participates in glycan metabolism; N-glycan degradation. Functionally, exoglycosidase that cleaves the single beta-linked mannose residue from the non-reducing end of beta-mannosidic oligosaccharides of various complexity and length. Involved in the degradation of polymeric mannan and galactomannan. This is Beta-mannosidase A (mndA) from Aspergillus niger (strain ATCC MYA-4892 / CBS 513.88 / FGSC A1513).